The sequence spans 434 residues: Nicotinate phosphoribosyltransferase (434 aa).

Phosphohistidine; by autocatalysis is present on H242.

This sequence belongs to the NAPRTase family. Transiently phosphorylated on a His residue during the reaction cycle. Phosphorylation strongly increases the affinity for substrates and increases the rate of nicotinate D-ribonucleotide production. Dephosphorylation regenerates the low-affinity form of the enzyme, leading to product release.

It catalyses the reaction nicotinate + 5-phospho-alpha-D-ribose 1-diphosphate + ATP + H2O = nicotinate beta-D-ribonucleotide + ADP + phosphate + diphosphate. Its pathway is cofactor biosynthesis; NAD(+) biosynthesis; nicotinate D-ribonucleotide from nicotinate: step 1/1. Its function is as follows. Catalyzes the synthesis of beta-nicotinate D-ribonucleotide from nicotinate and 5-phospho-D-ribose 1-phosphate at the expense of ATP. This Nitrobacter hamburgensis (strain DSM 10229 / NCIMB 13809 / X14) protein is Nicotinate phosphoribosyltransferase.